We begin with the raw amino-acid sequence, 347 residues long: Quinolinate synthase (347 aa).

Histidine 47 and serine 68 together coordinate iminosuccinate. Cysteine 113 provides a ligand contact to [4Fe-4S] cluster. Iminosuccinate contacts are provided by residues 139–141 (YAN) and serine 156. Cysteine 200 serves as a coordination point for [4Fe-4S] cluster. Residues 226 to 228 (HPE) and threonine 243 contribute to the iminosuccinate site. Position 297 (cysteine 297) interacts with [4Fe-4S] cluster.

This sequence belongs to the quinolinate synthase family. Type 1 subfamily. The cofactor is [4Fe-4S] cluster.

The protein resides in the cytoplasm. It carries out the reaction iminosuccinate + dihydroxyacetone phosphate = quinolinate + phosphate + 2 H2O + H(+). It functions in the pathway cofactor biosynthesis; NAD(+) biosynthesis; quinolinate from iminoaspartate: step 1/1. Its function is as follows. Catalyzes the condensation of iminoaspartate with dihydroxyacetone phosphate to form quinolinate. This chain is Quinolinate synthase, found in Escherichia coli O139:H28 (strain E24377A / ETEC).